The primary structure comprises 262 residues: Ribose-5-phosphate isomerase A (262 aa).

Substrate contacts are provided by residues 33-36 (TGST), 89-92 (DGAD), and 102-105 (KGGG). E111 functions as the Proton acceptor in the catalytic mechanism. A substrate-binding site is contributed by K129.

It belongs to the ribose 5-phosphate isomerase family. In terms of assembly, homodimer.

It carries out the reaction aldehydo-D-ribose 5-phosphate = D-ribulose 5-phosphate. It participates in carbohydrate degradation; pentose phosphate pathway; D-ribose 5-phosphate from D-ribulose 5-phosphate (non-oxidative stage): step 1/1. Functionally, catalyzes the reversible conversion of ribose-5-phosphate to ribulose 5-phosphate. In Cereibacter sphaeroides (strain KD131 / KCTC 12085) (Rhodobacter sphaeroides), this protein is Ribose-5-phosphate isomerase A.